Here is a 506-residue protein sequence, read N- to C-terminus: uncharacterized protein (506 aa).

Disordered regions lie at residues 104-144 (PNSS…ATSS) and 397-456 (QQQK…DQLP). A compositionally biased stretch (low complexity) spans 130 to 144 (ESSPTLSSSSLATSS). Over residues 405–443 (IKDEDKNEKENKSENEEKEKEKEKEKEKEKEKEKEKEKE) the composition is skewed to basic and acidic residues. The stretch at 405–455 (IKDEDKNEKENKSENEEKEKEKEKEKEKEKEKEKEKEKENEEGEEDNGDQL) forms a coiled coil.

This is an uncharacterized protein from Dictyostelium discoideum (Social amoeba).